We begin with the raw amino-acid sequence, 470 residues long: 3-isopropylmalate dehydratase large subunit (470 aa).

The [4Fe-4S] cluster site is built by Cys-351, Cys-411, and Cys-414.

It belongs to the aconitase/IPM isomerase family. LeuC type 1 subfamily. In terms of assembly, heterodimer of LeuC and LeuD. [4Fe-4S] cluster is required as a cofactor.

The catalysed reaction is (2R,3S)-3-isopropylmalate = (2S)-2-isopropylmalate. Its pathway is amino-acid biosynthesis; L-leucine biosynthesis; L-leucine from 3-methyl-2-oxobutanoate: step 2/4. Functionally, catalyzes the isomerization between 2-isopropylmalate and 3-isopropylmalate, via the formation of 2-isopropylmaleate. In Rhodopseudomonas palustris (strain HaA2), this protein is 3-isopropylmalate dehydratase large subunit.